A 70-amino-acid chain; its full sequence is Large ribosomal subunit protein bL31 (70 aa).

Zn(2+) contacts are provided by C16, C18, C37, and C40.

The protein belongs to the bacterial ribosomal protein bL31 family. Type A subfamily. As to quaternary structure, part of the 50S ribosomal subunit. The cofactor is Zn(2+).

Its function is as follows. Binds the 23S rRNA. The protein is Large ribosomal subunit protein bL31 of Proteus mirabilis (strain HI4320).